The chain runs to 250 residues: 5-oxoprolinase subunit A (250 aa).

The protein belongs to the LamB/PxpA family. As to quaternary structure, forms a complex composed of PxpA, PxpB and PxpC.

The enzyme catalyses 5-oxo-L-proline + ATP + 2 H2O = L-glutamate + ADP + phosphate + H(+). Its function is as follows. Catalyzes the cleavage of 5-oxoproline to form L-glutamate coupled to the hydrolysis of ATP to ADP and inorganic phosphate. The polypeptide is 5-oxoprolinase subunit A (Chromohalobacter salexigens (strain ATCC BAA-138 / DSM 3043 / CIP 106854 / NCIMB 13768 / 1H11)).